A 301-amino-acid polypeptide reads, in one-letter code: UstYa family oxidase phomYd (301 aa).

A disordered region spans residues Met1–Ser26. The helical transmembrane segment at Val47 to Trp69 threads the bilayer. 2 consecutive short sequence motifs (HXXHC) follow at residues Thr189–Cys194 and His218–Cys222. Asn275 carries an N-linked (GlcNAc...) asparagine glycan.

The protein belongs to the ustYa family.

Its subcellular location is the membrane. The protein operates within mycotoxin biosynthesis. In terms of biological role, ustYa family oxidase; part of the gene cluster that mediates the biosynthesis of the phomopsins, a group of hexapeptide mycotoxins which infects lupins and causes lupinosis disease in livestock. Within the pathway, phomYd catalyzes the desaturation of the Asp moiety into 2,3-dehydroaspartic acid (dAsp). The pathway starts with the processing of the precursor phomA by several endopeptidases including kexin proteases as well as the cluster-specific S41 family peptidase phomP1 and the oligopeptidase phomG to produce 10 identical copies of the hexapeptide Tyr-Val-Ile-Pro-Ile-Asp. After being excised from the precursor peptide, the core peptides are cyclized and modified post-translationally by enzymes encoded within the gene cluster. The timing and order of proteolysis of the phomA precursor and PTMs are still unknown. Two tyrosinase-like enzymes, phomQ1 and phomQ2, catalyze the chlorination and hydroxylation of Tyr, respectively. PhomYb, is proposed to be involved in the construction of the macrocyclic structure. The other 4 ustYa family proteins may be involved in PTMs that generate the unique structure of phomopsin A. PhomYa is required for the hydroxylation of C-beta of Tyr. PhomYc, phomYd, and phomYe are responsible for the biosynthesis of 2,3-dehydroisoleucine (dIle), 2,3-dehydroaspartic acid (dAsp), and 3,4-dehydroproline (dPro), respectively. While dIle formation by phomYc is indispensable for the installation of dAsp by phomYd, the order of the other PTMs have not been elucidated yet. Most of the biosynthetic enzymes likely have broad substrate specificity, and thus, there might be a metabolic grid from a precursor to phomopsin A. The enzyme(s) responsible for the biosynthesis of 3,4-dehydrovaline (dVal) have also not been identified yet. Finally, phomM acts as an S-adenosylmethionine-dependent alpha-N-methyltransferase that catalyzes two successive N-methylation reactions, converting N-desmethyl-phomopsin A to phomopsin A and phomopsin A further to an N,N-dimethylated congener called phomopsin E. The polypeptide is UstYa family oxidase phomYd (Diaporthe leptostromiformis (Lupinosis disease fungus)).